The following is an 826-amino-acid chain: Receptor-like protein 18 (826 aa).

Residues 1–780 (MRCQVWNVIE…EEDEEEVISW (780 aa)) are Extracellular-facing. LRR repeat units lie at residues 5–31 (VWNV…IFSL), 32–54 (QNLR…SLGN), 55–79 (FSSL…LGNL), 81–103 (HLTS…LGNL), 104–127 (SHLT…LGNL), 128–150 (SHLT…SFEN), and 151–177 (LSHL…SFNQ). N-linked (GlcNAc...) asparagine glycosylation is found at N12 and N54. N-linked (GlcNAc...) asparagine glycosylation is found at N102, N126, and N150. Residues 178–198 (LVSLAVEENEFTGNFLLILLN) form an LRR 8; degenerate repeat. N-linked (GlcNAc...) asparagine glycosylation is found at N198, N201, and N219. 20 LRR repeats span residues 199–223 (LTNL…MSSL), 225–247 (NLVL…LLNI), 248–271 (PSLS…NISS), 273–294 (LSDL…ISKL), 296–318 (NLYT…IFSD), 319–343 (LKLL…TFLS), 345–368 (FKSL…SVSN), 382–405 (PLLL…LRTQ), 406–429 (QTME…LWTL), 430–452 (PTLD…MVPS), 455–478 (QPSM…FICA), 479–500 (FTLQ…ENIS), 501–524 (ESLK…LVRI), 525–550 (SSLE…SLEE), 552–570 (QVLV…QTRF), 571–594 (PNLR…FFVN), 637–661 (LKIF…IGLL), 662–685 (KELH…MGKL), 686–709 (RELE…LGDL), and 711–734 (YLAY…QFLT). N268 is a glycosylation site (N-linked (GlcNAc...) asparagine). Residues N312, N331, N362, and N389 are each glycosylated (N-linked (GlcNAc...) asparagine). N-linked (GlcNAc...) asparagine glycans are attached at residues N436, N439, N467, and N498. N-linked (GlcNAc...) asparagine glycosylation occurs at N538. Residues N584 and N594 are each glycosylated (N-linked (GlcNAc...) asparagine). A glycan (N-linked (GlcNAc...) asparagine) is linked at N668. N-linked (GlcNAc...) asparagine glycans are attached at residues N716 and N736. The helical transmembrane segment at 781–801 (IAATIGFIPGIAFGLMMGYIL) threads the bilayer. The Cytoplasmic segment spans residues 802–826 (VCYKPEWFMNVFGKNKSRSTSSTTR).

It belongs to the RLP family.

It localises to the cell membrane. This Arabidopsis thaliana (Mouse-ear cress) protein is Receptor-like protein 18.